A 247-amino-acid chain; its full sequence is Coproheme decarboxylase (247 aa).

Residues R129, 143–147 (YPMDK), H170, Q183, and S221 contribute to the Fe-coproporphyrin III site. Residue Y143 is part of the active site.

Belongs to the ChdC family. Type 1 subfamily. Fe-coproporphyrin III is required as a cofactor.

It catalyses the reaction Fe-coproporphyrin III + 2 H2O2 + 2 H(+) = heme b + 2 CO2 + 4 H2O. It carries out the reaction Fe-coproporphyrin III + H2O2 + H(+) = harderoheme III + CO2 + 2 H2O. The enzyme catalyses harderoheme III + H2O2 + H(+) = heme b + CO2 + 2 H2O. It participates in porphyrin-containing compound metabolism; protoheme biosynthesis. Its function is as follows. Involved in coproporphyrin-dependent heme b biosynthesis. Catalyzes the decarboxylation of Fe-coproporphyrin III (coproheme) to heme b (protoheme IX), the last step of the pathway. The reaction occurs in a stepwise manner with a three-propionate intermediate. The protein is Coproheme decarboxylase of Bacillus cereus (strain AH820).